The following is a 148-amino-acid chain: UPF0756 membrane protein NMC1845 (148 aa).

Transmembrane regions (helical) follow at residues 13–35 (LILL…LLLM), 50–70 (HGLN…LVSG), 80–100 (FLNF…WLAG), and 121–141 (VIGV…AGIL).

Belongs to the UPF0756 family.

The protein resides in the cell membrane. The protein is UPF0756 membrane protein NMC1845 of Neisseria meningitidis serogroup C / serotype 2a (strain ATCC 700532 / DSM 15464 / FAM18).